Here is a 526-residue protein sequence, read N- to C-terminus: ATP synthase subunit alpha (526 aa).

Residue 171–178 (GDRQTGKT) coordinates ATP.

The protein belongs to the ATPase alpha/beta chains family. As to quaternary structure, F-type ATPases have 2 components, CF(1) - the catalytic core - and CF(0) - the membrane proton channel. CF(1) has five subunits: alpha(3), beta(3), gamma(1), delta(1), epsilon(1). CF(0) has four main subunits: a(1), b(1), b'(1) and c(9-12).

The protein resides in the cell inner membrane. It catalyses the reaction ATP + H2O + 4 H(+)(in) = ADP + phosphate + 5 H(+)(out). Functionally, produces ATP from ADP in the presence of a proton gradient across the membrane. The alpha chain is a regulatory subunit. In Chlorobium phaeovibrioides (strain DSM 265 / 1930) (Prosthecochloris vibrioformis (strain DSM 265)), this protein is ATP synthase subunit alpha.